Consider the following 439-residue polypeptide: Protease Do-like 1, chloroplastic (439 aa).

The tract at residues 154–323 is serine protease; sequence QGSGSGFVWD…IPVDTVGGIV (170 aa). Catalysis depends on charge relay system residues H173, D203, and S282. Residues 326–423 form the PDZ domain; the sequence is LVRFGKVTRP…EVTVEVLRGD (98 aa).

This sequence belongs to the peptidase S1C family. In terms of assembly, interacts with PTAC16 and other potential targets for degradation under high light conditions.

Its subcellular location is the plastid. The protein resides in the chloroplast thylakoid membrane. Inhibited by phenylmethylsulfonyl fluoride and O-phenanthroline. In terms of biological role, serine protease that is required at high temperature. May be involved in the degradation of damaged proteins. In vivo, can degrade beta-casein. In Arabidopsis thaliana (Mouse-ear cress), this protein is Protease Do-like 1, chloroplastic (DEGP1).